A 214-amino-acid polypeptide reads, in one-letter code: Pyridoxine/pyridoxamine 5'-phosphate oxidase (214 aa).

Substrate is bound by residues 9 to 12 (RREY) and Lys67. Residues 62-67 (RTVLLK), 77-78 (YS), Arg83, Lys84, and Gln106 each bind FMN. Residues Tyr124, Arg128, and Ser132 each coordinate substrate. Residues 141–142 (QS) and Trp186 each bind FMN. Substrate is bound at residue 192–194 (RLH). Arg196 contacts FMN.

Belongs to the pyridoxamine 5'-phosphate oxidase family. Homodimer. The cofactor is FMN.

It carries out the reaction pyridoxamine 5'-phosphate + O2 + H2O = pyridoxal 5'-phosphate + H2O2 + NH4(+). The catalysed reaction is pyridoxine 5'-phosphate + O2 = pyridoxal 5'-phosphate + H2O2. It functions in the pathway cofactor metabolism; pyridoxal 5'-phosphate salvage; pyridoxal 5'-phosphate from pyridoxamine 5'-phosphate: step 1/1. Its pathway is cofactor metabolism; pyridoxal 5'-phosphate salvage; pyridoxal 5'-phosphate from pyridoxine 5'-phosphate: step 1/1. In terms of biological role, catalyzes the oxidation of either pyridoxine 5'-phosphate (PNP) or pyridoxamine 5'-phosphate (PMP) into pyridoxal 5'-phosphate (PLP). This Porphyromonas gingivalis (strain ATCC BAA-308 / W83) protein is Pyridoxine/pyridoxamine 5'-phosphate oxidase.